The primary structure comprises 510 residues: ATP synthase subunit alpha (510 aa).

Position 170–177 (170–177) interacts with ATP; sequence GDRQTGKT.

This sequence belongs to the ATPase alpha/beta chains family. F-type ATPases have 2 components, CF(1) - the catalytic core - and CF(0) - the membrane proton channel. CF(1) has five subunits: alpha(3), beta(3), gamma(1), delta(1), epsilon(1). CF(0) has three main subunits: a(1), b(2) and c(9-12). The alpha and beta chains form an alternating ring which encloses part of the gamma chain. CF(1) is attached to CF(0) by a central stalk formed by the gamma and epsilon chains, while a peripheral stalk is formed by the delta and b chains.

It is found in the cell inner membrane. It carries out the reaction ATP + H2O + 4 H(+)(in) = ADP + phosphate + 5 H(+)(out). Functionally, produces ATP from ADP in the presence of a proton gradient across the membrane. The alpha chain is a regulatory subunit. The polypeptide is ATP synthase subunit alpha (Maricaulis maris (strain MCS10) (Caulobacter maris)).